The primary structure comprises 522 residues: Sugar transport protein 1 (522 aa).

The Cytoplasmic portion of the chain corresponds to 1-22 (MPAGGFVVGDGQKAYPGKLTPF). A helical membrane pass occupies residues 23–43 (VLFTCVVAAMGGLIFGYDIGI). Residues 44-79 (SGGVTSMPSFLKRFFPSVYRKQQEDASTNQYCQYDS) lie on the Extracellular side of the membrane. A helical transmembrane segment spans residues 80–100 (PTLTMFTSSLYLAALISSLVA). The Cytoplasmic portion of the chain corresponds to 101 to 117 (STVTRKFGRRLSMLFGG). A helical transmembrane segment spans residues 118 to 138 (ILFCAGALINGFAKHVWMLIV). Topologically, residues 139-140 (GR) are extracellular. The chain crosses the membrane as a helical span at residues 141–161 (ILLGFGIGFANQAVPLYLSEM). Residues 162-171 (APYKYRGALN) lie on the Cytoplasmic side of the membrane. A helical transmembrane segment spans residues 172–192 (IGFQLSITIGILVAEVLNYFF). Residues 193–202 (AKIKGGWGWR) lie on the Extracellular side of the membrane. Residues 203–223 (LSLGGAVVPALIITIGSLVLP) traverse the membrane as a helical segment. At 224-289 (DTPNSMIERG…YRPHLTMAVM (66 aa)) the chain is on the cytoplasmic side. Serine 252 carries the post-translational modification Phosphoserine. Residues 290–310 (IPFFQQLTGINVIMFYAPVLF) traverse the membrane as a helical segment. Over 311–321 (NTIGFTTDASL) the chain is Extracellular. A helical transmembrane segment spans residues 322–342 (MSAVVTGSVNVAATLVSIYGV). Over 343-348 (DRWGRR) the chain is Cytoplasmic. Residues 349 to 369 (FLFLEGGTQMLICQAVVAACI) form a helical membrane-spanning segment. Over 370 to 384 (GAKFGVDGTPGELPK) the chain is Extracellular. A helical transmembrane segment spans residues 385 to 405 (WYAIVVVTFICIYVAGFAWSW). Residues 406–427 (GPLGWLVPSEIFPLEIRSAAQS) lie on the Cytoplasmic side of the membrane. The helical transmembrane segment at 428 to 448 (ITVSVNMIFTFIIAQIFLTML) threads the bilayer. Over 449 to 452 (CHLK) the chain is Extracellular. Residues 453–473 (FGLFLVFAFFVVVMSIFVYIF) form a helical membrane-spanning segment. Over 474–522 (LPETKGIPIEEMGQVWRSHWYWSRFVEDGEYGNALEMGKNSNQAGTKHV) the chain is Cytoplasmic.

Belongs to the major facilitator superfamily. Sugar transporter (TC 2.A.1.1) family. As to expression, mostly expressed in young leaves, especially in guard cells (at protein level). Also present in roots.

It localises to the cell membrane. Functionally, major hexose transporter. Mediates an active uptake of hexoses, by sugar/hydrogen symport. Can transport glucose, 3-O-methylglucose, fructose, xylose, mannose, galactose, fucose, 2-deoxyglucose and arabinose. Confers sensitivity to galactose in seedlings. The protein is Sugar transport protein 1 (STP1) of Arabidopsis thaliana (Mouse-ear cress).